The sequence spans 187 residues: Elongation factor P (187 aa).

This sequence belongs to the elongation factor P family.

It localises to the cytoplasm. The protein operates within protein biosynthesis; polypeptide chain elongation. Its function is as follows. Involved in peptide bond synthesis. Stimulates efficient translation and peptide-bond synthesis on native or reconstituted 70S ribosomes in vitro. Probably functions indirectly by altering the affinity of the ribosome for aminoacyl-tRNA, thus increasing their reactivity as acceptors for peptidyl transferase. In Mycobacterium avium (strain 104), this protein is Elongation factor P.